The chain runs to 595 residues: Protein halfway (595 aa).

2 disordered regions span residues 1 to 42 (MLLT…ADDE) and 64 to 98 (TGAATEATHSQPVVTAVPATSSTSTSTTVPAPLLP). N-linked (GlcNAc...) asparagine glycans are attached at residues Asn-250 and Asn-255. In terms of domain architecture, LRRNT spans 347 to 402 (ESTKRCMTKCPVIPNYGSCKCRFESIMIIQDDQSKPKCHVDCSNLGLVELPPRLPD). LRR repeat units follow at residues 403–424 (NTFVLNITNNKITSLGDHFQTN), 429–450 (NINRLVADNNQISSIYEFEGTK), and 454–475 (NFQRIYMRNNSLSKIPEYFLNN). In terms of domain architecture, LRRCT spans 489-538 (NKLQCDCNSAKTLQNWLKERSTDIPDYMEIRCRNIPQSVIELQEAKLCQS).

Its function is as follows. Has a role in the ecdysone induced cascade; probably indirect control of 'late' ecdysone genes. The protein is Protein halfway (hfw) of Drosophila pseudoobscura pseudoobscura (Fruit fly).